A 416-amino-acid chain; its full sequence is Gamma-glutamyl phosphate reductase (416 aa).

Belongs to the gamma-glutamyl phosphate reductase family.

Its subcellular location is the cytoplasm. It catalyses the reaction L-glutamate 5-semialdehyde + phosphate + NADP(+) = L-glutamyl 5-phosphate + NADPH + H(+). It participates in amino-acid biosynthesis; L-proline biosynthesis; L-glutamate 5-semialdehyde from L-glutamate: step 2/2. Its function is as follows. Catalyzes the NADPH-dependent reduction of L-glutamate 5-phosphate into L-glutamate 5-semialdehyde and phosphate. The product spontaneously undergoes cyclization to form 1-pyrroline-5-carboxylate. This chain is Gamma-glutamyl phosphate reductase, found in Leptospira interrogans serogroup Icterohaemorrhagiae serovar Lai (strain 56601).